The sequence spans 250 residues: 26 kDa periplasmic immunogenic protein (250 aa).

The first 28 residues, 1-28, serve as a signal peptide directing secretion; the sequence is MNTRASNFLAASFSTIMLVGAFSLPAFA.

It localises to the periplasm. The polypeptide is 26 kDa periplasmic immunogenic protein (bp26) (Brucella melitensis biotype 1 (strain ATCC 23456 / CCUG 17765 / NCTC 10094 / 16M)).